Here is a 307-residue protein sequence, read N- to C-terminus: Ornithine carbamoyltransferase (307 aa).

Carbamoyl phosphate-binding positions include 53 to 56, glutamine 80, arginine 104, and 131 to 134; these read STRT and HPCQ. L-ornithine-binding positions include asparagine 162, aspartate 220, and 224-225; that span reads SM. Residues 260-261 and arginine 288 each bind carbamoyl phosphate; that span reads CL.

It belongs to the aspartate/ornithine carbamoyltransferase superfamily. OTCase family.

The protein localises to the cytoplasm. The enzyme catalyses carbamoyl phosphate + L-ornithine = L-citrulline + phosphate + H(+). The protein operates within amino-acid biosynthesis; L-arginine biosynthesis; L-arginine from L-ornithine and carbamoyl phosphate: step 1/3. In terms of biological role, reversibly catalyzes the transfer of the carbamoyl group from carbamoyl phosphate (CP) to the N(epsilon) atom of ornithine (ORN) to produce L-citrulline. This Nitrosomonas eutropha (strain DSM 101675 / C91 / Nm57) protein is Ornithine carbamoyltransferase.